Reading from the N-terminus, the 453-residue chain is Protein LOW PSII ACCUMULATION 1, chloroplastic (453 aa).

Residues 1–92 (MAVATAPSLN…LDLFKRGRVK (92 aa)) constitute a chloroplast transit peptide. TPR repeat units lie at residues 75-108 (AELCVNTGLDLFKRGRVKDALVQFETALSLAPNP) and 112-145 (QAAYYNKACCHAYRGEGKKAVDCLRIALRDYNLK). 2 helical membrane-spanning segments follow: residues 202–222 (FFYFAFAAAAGISMFFTVPRL) and 238–258 (TTGNAAINIGGIVVMVSLFLW).

Interacts with psbA, but not with psbD, petB, ALB3, LPA2 or LPA3. Is not a component of the PSII complex.

Its subcellular location is the plastid. It localises to the chloroplast thylakoid membrane. Chaperone required for efficient photosystem II (PSII) assembly. Binds to psbA during de novo biogenesis of PSII. The chain is Protein LOW PSII ACCUMULATION 1, chloroplastic (LPA1) from Arabidopsis thaliana (Mouse-ear cress).